The primary structure comprises 363 residues: tRNA(Met) cytidine acetate ligase (363 aa).

ATP is bound by residues Ile7–Leu20, Gly96, Asn152, and Arg175.

This sequence belongs to the TmcAL family.

Its subcellular location is the cytoplasm. It catalyses the reaction cytidine(34) in elongator tRNA(Met) + acetate + ATP = N(4)-acetylcytidine(34) in elongator tRNA(Met) + AMP + diphosphate. Its function is as follows. Catalyzes the formation of N(4)-acetylcytidine (ac(4)C) at the wobble position of elongator tRNA(Met), using acetate and ATP as substrates. First activates an acetate ion to form acetyladenylate (Ac-AMP) and then transfers the acetyl group to tRNA to form ac(4)C34. The chain is tRNA(Met) cytidine acetate ligase from Streptococcus thermophilus (strain ATCC BAA-491 / LMD-9).